The chain runs to 97 residues: Co-chaperonin GroES (97 aa).

It belongs to the GroES chaperonin family. Heptamer of 7 subunits arranged in a ring. Interacts with the chaperonin GroEL.

The protein localises to the cytoplasm. In terms of biological role, together with the chaperonin GroEL, plays an essential role in assisting protein folding. The GroEL-GroES system forms a nano-cage that allows encapsulation of the non-native substrate proteins and provides a physical environment optimized to promote and accelerate protein folding. GroES binds to the apical surface of the GroEL ring, thereby capping the opening of the GroEL channel. In Aeromonas salmonicida, this protein is Co-chaperonin GroES.